Consider the following 378-residue polypeptide: UDP-N-acetylglucosamine--N-acetylmuramyl-(pentapeptide) pyrophosphoryl-undecaprenol N-acetylglucosamine transferase (378 aa).

UDP-N-acetyl-alpha-D-glucosamine contacts are provided by residues 14–16 (TGG), Asn125, Arg165, Ser193, and Gln293.

It belongs to the glycosyltransferase 28 family. MurG subfamily.

It localises to the cell inner membrane. The enzyme catalyses di-trans,octa-cis-undecaprenyl diphospho-N-acetyl-alpha-D-muramoyl-L-alanyl-D-glutamyl-meso-2,6-diaminopimeloyl-D-alanyl-D-alanine + UDP-N-acetyl-alpha-D-glucosamine = di-trans,octa-cis-undecaprenyl diphospho-[N-acetyl-alpha-D-glucosaminyl-(1-&gt;4)]-N-acetyl-alpha-D-muramoyl-L-alanyl-D-glutamyl-meso-2,6-diaminopimeloyl-D-alanyl-D-alanine + UDP + H(+). It participates in cell wall biogenesis; peptidoglycan biosynthesis. Its function is as follows. Cell wall formation. Catalyzes the transfer of a GlcNAc subunit on undecaprenyl-pyrophosphoryl-MurNAc-pentapeptide (lipid intermediate I) to form undecaprenyl-pyrophosphoryl-MurNAc-(pentapeptide)GlcNAc (lipid intermediate II). This is UDP-N-acetylglucosamine--N-acetylmuramyl-(pentapeptide) pyrophosphoryl-undecaprenol N-acetylglucosamine transferase from Bartonella henselae (strain ATCC 49882 / DSM 28221 / CCUG 30454 / Houston 1) (Rochalimaea henselae).